We begin with the raw amino-acid sequence, 101 residues long: Large ribosomal subunit protein uL23 (101 aa).

It belongs to the universal ribosomal protein uL23 family. As to quaternary structure, part of the 50S ribosomal subunit. Contacts protein L29, and trigger factor when it is bound to the ribosome.

Functionally, one of the early assembly proteins it binds 23S rRNA. One of the proteins that surrounds the polypeptide exit tunnel on the outside of the ribosome. Forms the main docking site for trigger factor binding to the ribosome. This Tolumonas auensis (strain DSM 9187 / NBRC 110442 / TA 4) protein is Large ribosomal subunit protein uL23.